The following is a 530-amino-acid chain: AP-4 complex subunit mu (530 aa).

A disordered region spans residues 164 to 187 (PKQGVKPIHSGSKNSSSGGSSLST). A compositionally biased stretch (low complexity) spans 173 to 186 (SGSKNSSSGGSSLS). In terms of domain architecture, MHD spans 227–527 (DNEIYIDLCE…ITDSKSFVSR (301 aa)).

Belongs to the adaptor complexes medium subunit family. In terms of assembly, may be part of the adaptor protein complex 4 (AP-4), a heterotetramer composed of two large adaptins (epsilon-type subunitand beta-type subunit), a medium adaptin (mu-type subunit) and a small adaptin (sigma-type).

It is found in the golgi apparatus. The protein resides in the trans-Golgi network membrane. The protein localises to the early endosome. Its function is as follows. Probable component of an adaptor protein complex. Adaptor protein complexes are vesicle coat components involved both in vesicle formation and cargo selection. They control the vesicular transport of proteins in different trafficking pathways. The chain is AP-4 complex subunit mu (apm4) from Dictyostelium discoideum (Social amoeba).